Here is a 272-residue protein sequence, read N- to C-terminus: Phosphatidylglycerol--prolipoprotein diacylglyceryl transferase (272 aa).

A run of 4 helical transmembrane segments spans residues I21–A41, Y60–Y80, G101–A121, and V131–G151. Residue R152 participates in a 1,2-diacyl-sn-glycero-3-phospho-(1'-sn-glycerol) binding. The next 3 membrane-spanning stretches (helical) occupy residues P181–Y201, G209–F229, and L244–V264.

Belongs to the Lgt family.

The protein resides in the cell inner membrane. The enzyme catalyses L-cysteinyl-[prolipoprotein] + a 1,2-diacyl-sn-glycero-3-phospho-(1'-sn-glycerol) = an S-1,2-diacyl-sn-glyceryl-L-cysteinyl-[prolipoprotein] + sn-glycerol 1-phosphate + H(+). The protein operates within protein modification; lipoprotein biosynthesis (diacylglyceryl transfer). In terms of biological role, catalyzes the transfer of the diacylglyceryl group from phosphatidylglycerol to the sulfhydryl group of the N-terminal cysteine of a prolipoprotein, the first step in the formation of mature lipoproteins. This is Phosphatidylglycerol--prolipoprotein diacylglyceryl transferase from Aliarcobacter butzleri (strain RM4018) (Arcobacter butzleri).